Here is a 208-residue protein sequence, read N- to C-terminus: MAKYTGPKLKQARREGTDLFLKSGVRPIDSKCKIEQVPGQHGAGARRARMSDYALQLREKQKLRRMYGVLERQFRRYYKEAARRKGSTGENLLKLLESRLDNVVYRMGFGSTRAEARQLINHKGVLVNGQGINIPSYQVRAEDVVAVREKAKRQDRIKFALELAQARAEAEWIEINAGKLEGVFKRVPERSELAPDIQENLVVELYSK.

One can recognise an S4 RNA-binding domain in the interval 98–164 (SRLDNVVYRM…DRIKFALELA (67 aa)).

The protein belongs to the universal ribosomal protein uS4 family. Part of the 30S ribosomal subunit. Contacts protein S5. The interaction surface between S4 and S5 is involved in control of translational fidelity.

Functionally, one of the primary rRNA binding proteins, it binds directly to 16S rRNA where it nucleates assembly of the body of the 30S subunit. With S5 and S12 plays an important role in translational accuracy. The chain is Small ribosomal subunit protein uS4 from Nitrosococcus oceani (strain ATCC 19707 / BCRC 17464 / JCM 30415 / NCIMB 11848 / C-107).